The sequence spans 294 residues: Deubiquitinase OTUD6B (294 aa).

Positions 85-120 (VTSLDLGSEEPVQQPRVSKAQKRREKKAAQEKERDD) are disordered. The segment covering 111 to 120 (KAAQEKERDD) has biased composition (basic and acidic residues). The region spanning 150-287 (LQIRQIPSDG…GEHYNSVEQL (138 aa)) is the OTU domain. A cys-loop region spans residues 155–161 (IPSDGHC). The active site involves Asp158. Cys161 functions as the Nucleophile in the catalytic mechanism. Residues 222 to 232 (IVNTPAWGGQL) are variable-loop. The tract at residues 270-280 (YMRHAYGLGEH) is his-loop. His280 is an active-site residue.

The enzyme catalyses Thiol-dependent hydrolysis of ester, thioester, amide, peptide and isopeptide bonds formed by the C-terminal Gly of ubiquitin (a 76-residue protein attached to proteins as an intracellular targeting signal).. Functionally, deubiquitinating enzyme that may play a role in the ubiquitin-dependent regulation of different cellular processes. The protein is Deubiquitinase OTUD6B (otud6b) of Xenopus laevis (African clawed frog).